The primary structure comprises 434 residues: Protein trichome birefringence-like 3 (434 aa).

The chain crosses the membrane as a helical; Signal-anchor for type II membrane protein span at residues 15–35 (IPLSIIVLVLCGFMFFILLYT). The short motif at 166 to 168 (GDS) is the GDS motif element. The short motif at 413-427 (DCIHWCLPGLPDTWN) is the DCXHWCLPGXXDXWN motif element.

It belongs to the PC-esterase family. TBL subfamily.

It localises to the golgi apparatus membrane. Involved in secondary cell wall cellulose deposition. Required for normal stem development. May act as a bridging protein that binds pectin and other cell wall polysaccharides. Probably involved in maintaining esterification of pectins. May be involved in the specific O-acetylation of cell wall polymers. The sequence is that of Protein trichome birefringence-like 3 (TBL3) from Arabidopsis thaliana (Mouse-ear cress).